The sequence spans 157 residues: Endoribonuclease YbeY (157 aa).

Residues histidine 118, histidine 122, and histidine 128 each coordinate Zn(2+).

It belongs to the endoribonuclease YbeY family. Zn(2+) is required as a cofactor.

It is found in the cytoplasm. Single strand-specific metallo-endoribonuclease involved in late-stage 70S ribosome quality control and in maturation of the 3' terminus of the 16S rRNA. In Bordetella bronchiseptica (strain ATCC BAA-588 / NCTC 13252 / RB50) (Alcaligenes bronchisepticus), this protein is Endoribonuclease YbeY.